An 807-amino-acid chain; its full sequence is Glycerol-3-phosphate acyltransferase (807 aa).

Positions 308–313 (CHRSHM) match the HXXXXD motif motif.

This sequence belongs to the GPAT/DAPAT family.

Its subcellular location is the cell inner membrane. The enzyme catalyses sn-glycerol 3-phosphate + an acyl-CoA = a 1-acyl-sn-glycero-3-phosphate + CoA. It participates in phospholipid metabolism; CDP-diacylglycerol biosynthesis; CDP-diacylglycerol from sn-glycerol 3-phosphate: step 1/3. In Shewanella sp. (strain W3-18-1), this protein is Glycerol-3-phosphate acyltransferase.